The chain runs to 182 residues: Dipetalodipin (182 aa).

An N-terminal signal peptide occupies residues 1–18 (MKTIIAAIFLGILMHAFA). Disulfide bonds link Cys-21–Cys-134, Cys-55–Cys-181, and Cys-87–Cys-103.

Belongs to the calycin superfamily. Triabin family. Expressed in salivary glands.

It localises to the secreted. Inhibits platelet aggregation, vasoconstriction, and angiogenesis through binding to distinct eicosanoids involved in inflammation (acts as a scavenger), and has a role in inhibiting host innate immunity by impairing platelet-assisted formation of neutrophil extracellular traps (NETs). Inhibits platelet aggregation by collagen (IC(50)=30 nM), thromboxane A2 mimetic (TXA2 mimetic), or arachidonic acid (AA) without affecting aggregation induced by ADP, convulxin (GP6 agonist), PMA, and ristocetin (vWF-dependent platelet agglutinator). Binds with high affinity to TXA2, TXB2, prostaglandine H2 mimetic (PGH2 mimetic), PGD2, PGJ2, and PGF2alpha. Also interacts with 15(S)-hydroxyeicosatetraenoic acid (HETE), being the first calycin/lipocalin described to date to bind to a derivative of 15-lipoxygenase. Binding is not observed to other prostaglandins, leukotrienes, HETEs, lipids, and biogenic amines. It prevents contraction of rat uterus stimulated by PGF2alpha and induces relaxation of aorta previously contracted with TXA2 mimetic. In addition, it inhibits angiogenesis mediated by 15(S)-HETE and does not enhance inhibition of collagen-induced platelet aggregation by SQ29548 (TXA2 antagonist) and indomethacin. Also impairs platelet-assisted formation of neutrophil extracellular traps (NETs). NETs are web-like structures of DNA and proteins that play an important role in killing of pathogens. In addition, NETs are implicated in thrombus formation. In vivo, this protein exhibits antithrombotic activity in two distinct mice models that are highly dependent on platelets. It is noteworthy that it inhibits thrombosis without promoting excessive bleeding. This chain is Dipetalodipin, found in Dipetalogaster maximus (Blood-sucking bug).